The primary structure comprises 371 residues: 4-hydroxybenzoate polyprenyltransferase, mitochondrial (371 aa).

The N-terminal 45 residues, 1–45, are a transit peptide targeting the mitochondrion; sequence MLGSCGAGLVRGLRAETQAWLWGTRGRSLALVHAARGLHAANWQP. Topologically, residues 46-83 are mitochondrial matrix; it reads SPGQGPRGRPLSLSAAAVVNSAPRPLQPYLRLMRLDKP. Residues 84–104 traverse the membrane as a helical segment; it reads IGTWLLYLPCTWSIGLAADPG. The Mitochondrial intermembrane portion of the chain corresponds to 105–108; the sequence is CLPD. A helical transmembrane segment spans residues 109–129; sequence WYMLSLFGTGAVLMRGAGCTI. At 130–171 the chain is on the mitochondrial matrix side; sequence NDMWDRDYDKKVTRTASRPIAAGDISTFRSFVFLGGQLTLAL. A helical membrane pass occupies residues 172–192; the sequence is GVLLCLNYYSIALGAASLLLV. The Mitochondrial intermembrane portion of the chain corresponds to 193-200; that stretch reads TTYPLMKR. The chain crosses the membrane as a helical span at residues 201–221; that stretch reads ITYWPQLALGLTFNWGALLGW. Topologically, residues 222–231 are mitochondrial matrix; it reads SAVKGSCDPS. The chain crosses the membrane as a helical span at residues 232–252; the sequence is VCLPLYFSGIMWTLIYDTIYA. The Mitochondrial intermembrane segment spans residues 253-277; sequence HQDKKDDALIGLKSTALLFREDTKK. The helical transmembrane segment at 278–298 threads the bilayer; it reads WLSGFSVAMLGALSLVGVNSG. At 299-300 the chain is on the mitochondrial matrix side; the sequence is QT. The helical transmembrane segment at 301 to 321 threads the bilayer; it reads MPYYTALAAVGAHLAHQIYTL. Residues 322-332 lie on the Mitochondrial intermembrane side of the membrane; that stretch reads DINRPEDCWEK. A helical membrane pass occupies residues 333–353; that stretch reads FTSNRTIGLIIFLGIVLGNLC. At 354–371 the chain is on the mitochondrial matrix side; it reads KAKETDKTRKNIENRMEN.

It belongs to the UbiA prenyltransferase family. It depends on Mg(2+) as a cofactor.

Its subcellular location is the mitochondrion inner membrane. The enzyme catalyses an all-trans-polyprenyl diphosphate + 4-hydroxybenzoate = a 4-hydroxy-3-(all-trans-polyprenyl)benzoate + diphosphate. The catalysed reaction is all-trans-decaprenyl diphosphate + 4-hydroxybenzoate = 4-hydroxy-3-(all-trans-decaprenyl)benzoate + diphosphate. It carries out the reaction all-trans-nonaprenyl diphosphate + 4-hydroxybenzoate = 4-hydroxy-3-(all-trans-nonaprenyl)benzoate + diphosphate. The protein operates within cofactor biosynthesis; ubiquinone biosynthesis. Functionally, mediates the second step in the final reaction sequence of coenzyme Q (CoQ) biosynthesis. Catalyzes the prenylation of para-hydroxybenzoate (PHB) with an all-trans polyprenyl donor (such as all-trans-decaprenyl diphosphate). The length of the polyprenyl side chain varies depending on the species, in humans, the side chain is comprised of 10 isoprenyls (decaprenyl) producing CoQ10 (also known as ubiquinone), whereas rodents predominantly generate CoQ9. However, this specificity is not complete, human tissues have low amounts of CoQ9 and rodent organs contain some CoQ10. Plays a central role in the biosynthesis of CoQ10. CoQ10 is a vital molecule that transports electrons from mitochondrial respiratory chain complexes. CoQs also function as cofactors for uncoupling protein and play a role as regulators of the extracellularly-induced ceramide-dependent apoptotic pathway. Regulates mitochondrial permeability transition pore (mPTP) opening and ROS production (pivotal events in cell death) in a tissue specific manner. This is 4-hydroxybenzoate polyprenyltransferase, mitochondrial from Bos taurus (Bovine).